A 206-amino-acid chain; its full sequence is Small ribosomal subunit protein uS4A (206 aa).

The S4 RNA-binding domain occupies 98–164; that stretch reads MRLDNVVYKL…EKFKTFAENP (67 aa).

The protein belongs to the universal ribosomal protein uS4 family. In terms of assembly, part of the 30S ribosomal subunit. Contacts protein S5. The interaction surface between S4 and S5 is involved in control of translational fidelity.

One of the primary rRNA binding proteins, it binds directly to 16S rRNA where it nucleates assembly of the body of the 30S subunit. Its function is as follows. With S5 and S12 plays an important role in translational accuracy. In Clostridium novyi (strain NT), this protein is Small ribosomal subunit protein uS4A.